A 282-amino-acid polypeptide reads, in one-letter code: 2-dehydro-3-deoxyphosphooctonate aldolase (282 aa).

The protein belongs to the KdsA family.

The protein localises to the cytoplasm. The enzyme catalyses D-arabinose 5-phosphate + phosphoenolpyruvate + H2O = 3-deoxy-alpha-D-manno-2-octulosonate-8-phosphate + phosphate. It functions in the pathway carbohydrate biosynthesis; 3-deoxy-D-manno-octulosonate biosynthesis; 3-deoxy-D-manno-octulosonate from D-ribulose 5-phosphate: step 2/3. The protein operates within bacterial outer membrane biogenesis; lipopolysaccharide biosynthesis. The sequence is that of 2-dehydro-3-deoxyphosphooctonate aldolase from Granulibacter bethesdensis (strain ATCC BAA-1260 / CGDNIH1).